The primary structure comprises 318 residues: Mitochondrial thiamine pyrophosphate carrier 1 (318 aa).

The next 6 helical transmembrane spans lie at 12-28 (GTRRQVVLAGGIAGLVS), 91-107 (LMYVCYGAIQFAAYRTT), 125-141 (SFVAGATAGGLATASTY), 181-197 (GCSAAVGQIVPYMGLFF), 221-237 (AAGVVASVLAKTGVFPL), and 284-301 (GLTVSLFKAAPASAVTMW). Solcar repeat units lie at residues 12–110 (GTRR…TTQA), 120–206 (PPPA…LRPV), and 214–309 (PFGS…SLHY).

It belongs to the mitochondrial carrier (TC 2.A.29) family.

The protein localises to the mitochondrion inner membrane. In terms of biological role, mitochondrial transporter that mediates uptake of thiamine pyrophosphate (ThPP) into mitochondria. In Aspergillus oryzae (strain ATCC 42149 / RIB 40) (Yellow koji mold), this protein is Mitochondrial thiamine pyrophosphate carrier 1 (tpc1).